Consider the following 302-residue polypeptide: Cardiolipin synthase (CMP-forming) (302 aa).

Residues 65–84 form a disordered region; that stretch reads PRTHCSGAGKAAPEPAAGGD. Positions 71 to 84 are enriched in low complexity; sequence GAGKAAPEPAAGGD. The next 5 helical transmembrane spans lie at 109–129, 133–153, 190–212, 250–270, and 271–289; these read IPNL…YLIL, FNVA…DGFI, IPVP…VFYV, LILV…SIYL, and QILW…YSYY.

The protein belongs to the CDP-alcohol phosphatidyltransferase class-I family. The cofactor is a divalent metal cation.

It is found in the mitochondrion inner membrane. It catalyses the reaction a CDP-1,2-diacyl-sn-glycerol + a 1,2-diacyl-sn-glycero-3-phospho-(1'-sn-glycerol) = a cardiolipin + CMP + H(+). In terms of biological role, catalyzes the synthesis of cardiolipin (CL) (diphosphatidylglycerol) by specifically transferring a phosphatidyl group from CDP-diacylglycerol to phosphatidylglycerol (PG). CL is a key phospholipid in mitochondrial membranes and plays important roles in maintaining the functional integrity and dynamics of mitochondria under both optimal and stress conditions. The chain is Cardiolipin synthase (CMP-forming) (Crls1) from Rattus norvegicus (Rat).